The following is a 301-amino-acid chain: CRISPR-associated endonuclease Cas1 (301 aa).

Mn(2+) contacts are provided by glutamate 133, histidine 200, and aspartate 213.

The protein belongs to the CRISPR-associated endonuclease Cas1 family. In terms of assembly, homodimer, forms a heterotetramer with a Cas2 homodimer. Mg(2+) serves as cofactor. Mn(2+) is required as a cofactor.

Functionally, CRISPR (clustered regularly interspaced short palindromic repeat), is an adaptive immune system that provides protection against mobile genetic elements (viruses, transposable elements and conjugative plasmids). CRISPR clusters contain spacers, sequences complementary to antecedent mobile elements, and target invading nucleic acids. CRISPR clusters are transcribed and processed into CRISPR RNA (crRNA). Acts as a dsDNA endonuclease. Involved in the integration of spacer DNA into the CRISPR cassette. This Clostridium sp. (strain SY8519) protein is CRISPR-associated endonuclease Cas1.